A 270-amino-acid chain; its full sequence is Tryptophan synthase alpha chain (270 aa).

Residues E49 and D60 each act as proton acceptor in the active site.

This sequence belongs to the TrpA family. As to quaternary structure, tetramer of two alpha and two beta chains.

It carries out the reaction (1S,2R)-1-C-(indol-3-yl)glycerol 3-phosphate + L-serine = D-glyceraldehyde 3-phosphate + L-tryptophan + H2O. The protein operates within amino-acid biosynthesis; L-tryptophan biosynthesis; L-tryptophan from chorismate: step 5/5. Functionally, the alpha subunit is responsible for the aldol cleavage of indoleglycerol phosphate to indole and glyceraldehyde 3-phosphate. The chain is Tryptophan synthase alpha chain from Pseudomonas syringae pv. tomato (strain ATCC BAA-871 / DC3000).